Here is a 563-residue protein sequence, read N- to C-terminus: DNA polymerase III subunit tau (563 aa).

Residue 45–52 (GPRGTGKT) coordinates ATP. Residues C64, C73, C76, and C79 each contribute to the Zn(2+) site.

The protein belongs to the DnaX/STICHEL family. In terms of assembly, component of the DNA clamp loading complex consisting of tau(3):delta(1):delta'(1). The DNA polymerase III holoenzyme complex contains at least 10 different subunits organized into 3 functionally essential subassemblies: the Pol III core, the beta sliding clamp processivity factor and the clamp-loading complex. The Pol III core (subunits alpha, epsilon and theta) contains the polymerase and the 3'-5' exonuclease proofreading activities. The polymerase is tethered to the template via the dimeric beta sliding clamp processivity factor. The DNA clamp-loading complex assembles the beta sliding clamp onto the primed template and plays a central role in the organization and communication at the replication fork. Forms a complex with replicative DNA helicase DnaB (shown with G.stearothermophilus DnaB) tau(3):DnaB(6); a single ATP hydrolysis even is sufficient for complex formation. Colocalizes with DNA helicases PriA, RecQ and RecS.

It is found in the cytoplasm. The protein resides in the nucleoid. The catalysed reaction is DNA(n) + a 2'-deoxyribonucleoside 5'-triphosphate = DNA(n+1) + diphosphate. In terms of biological role, part of the beta sliding clamp loading complex, which hydrolyzes ATP to load the beta clamp onto primed DNA to form the DNA replication pre-initiation complex. DNA polymerase III is a complex, multichain enzyme responsible for most of the replicative DNA synthesis in bacteria. This Bacillus subtilis (strain 168) protein is DNA polymerase III subunit tau.